The following is a 253-amino-acid chain: Testis-expressed protein 47 (253 aa).

Testis-specific.

This is Testis-expressed protein 47 from Homo sapiens (Human).